The primary structure comprises 211 residues: Endo-1,4-beta-xylanase A (211 aa).

The signal sequence occupies residues methionine 1–arginine 27. One can recognise a GH11 domain in the interval serine 28–serine 210. The active-site Nucleophile is glutamate 106. Cysteines 119 and 138 form a disulfide. Glutamate 197 serves as the catalytic Proton donor.

It belongs to the glycosyl hydrolase 11 (cellulase G) family.

It localises to the secreted. The enzyme catalyses Endohydrolysis of (1-&gt;4)-beta-D-xylosidic linkages in xylans.. Its pathway is glycan degradation; xylan degradation. In terms of biological role, endo-1,4-beta-xylanase involved in the hydrolysis of xylan, a major structural heterogeneous polysaccharide found in plant biomass representing the second most abundant polysaccharide in the biosphere, after cellulose. This chain is Endo-1,4-beta-xylanase A (xynA), found in Aspergillus niger.